We begin with the raw amino-acid sequence, 370 residues long: L-lysine 4-hydroxylase (370 aa).

Positions 176, 178, and 310 each coordinate Fe cation.

Belongs to the clavaminate synthase family. Fe(2+) is required as a cofactor.

It catalyses the reaction L-lysine + 2-oxoglutarate + O2 = (4R)-4-hydroxy-L-lysine + succinate + CO2. Alpha-ketoglutarate-dependent dioxygenase that in vitro catalyzes the regio- and stereoselective hydroxylation of L-lysine, leading to (4R)-4-hydroxy-L-lysine. To a lesser extent, can also use (3S)-3-hydroxy-L-lysine as substrate, producing the dihydroxylated product (3R,4R)-3,4-hydroxy-L-lysine. Cannot use D-lysine or L-ornithine as substrate. The chain is L-lysine 4-hydroxylase from Flavobacterium johnsoniae (strain ATCC 17061 / DSM 2064 / JCM 8514 / BCRC 14874 / CCUG 350202 / NBRC 14942 / NCIMB 11054 / UW101) (Cytophaga johnsonae).